The sequence spans 143 residues: Transcriptional regulator SlyA (143 aa).

One can recognise an HTH marR-type domain in the interval 2 to 135 (ESTLGSDLAR…LSGLIDKLEK (134 aa)). A DNA-binding region (H-T-H motif) is located at residues 49 to 72 (QIQLAKAIGIEQPSLVRTLDQLEE).

It belongs to the SlyA family. In terms of assembly, homodimer.

Functionally, transcription regulator that can specifically activate or repress expression of target genes. The sequence is that of Transcriptional regulator SlyA from Yersinia pestis bv. Antiqua (strain Antiqua).